Here is a 357-residue protein sequence, read N- to C-terminus: Cyclin-Y (357 aa).

Polar residues predominate over residues 1–13 (MGNSSCCLRTRSS). Positions 1-23 (MGNSSCCLRTRSSSGEDKSYNND) are disordered. A Cyclin N-terminal domain is found at 186–284 (PDHRNIYRFV…RFLECLDFNI (99 aa)).

It belongs to the cyclin family. In terms of assembly, interacts with pct-1; the interaction is required to activate pct-1.

It is found in the cytoplasm. The protein localises to the cell projection. The protein resides in the dendrite. Its subcellular location is the axon. Its function is as follows. In association with pct-1, regulates the trafficking of synaptic vesicle precursors in DA motor neurons by promoting anterograde trafficking to the axon and preventing dynein-dependent trafficking to the dendrite. May also regulate synaptic vesicle trafficking in DD motor neurons and in RIA interneurons. Involved in synapse formation during DD motor neuron remodeling by disassembling ventral presynaptic structures. May activate cdk-5. The sequence is that of Cyclin-Y from Caenorhabditis elegans.